The chain runs to 185 residues: ATP synthase subunit delta (185 aa).

The protein belongs to the ATPase delta chain family. As to quaternary structure, F-type ATPases have 2 components, F(1) - the catalytic core - and F(0) - the membrane proton channel. F(1) has five subunits: alpha(3), beta(3), gamma(1), delta(1), epsilon(1). F(0) has three main subunits: a(1), b(2) and c(10-14). The alpha and beta chains form an alternating ring which encloses part of the gamma chain. F(1) is attached to F(0) by a central stalk formed by the gamma and epsilon chains, while a peripheral stalk is formed by the delta and b chains.

Its subcellular location is the cell inner membrane. Its function is as follows. F(1)F(0) ATP synthase produces ATP from ADP in the presence of a proton or sodium gradient. F-type ATPases consist of two structural domains, F(1) containing the extramembraneous catalytic core and F(0) containing the membrane proton channel, linked together by a central stalk and a peripheral stalk. During catalysis, ATP synthesis in the catalytic domain of F(1) is coupled via a rotary mechanism of the central stalk subunits to proton translocation. This protein is part of the stalk that links CF(0) to CF(1). It either transmits conformational changes from CF(0) to CF(1) or is implicated in proton conduction. The chain is ATP synthase subunit delta from Coxiella burnetii (strain CbuK_Q154) (Coxiella burnetii (strain Q154)).